Reading from the N-terminus, the 405-residue chain is Low-salt glycan biosynthesis sulfotransferase Agl7 (405 aa).

Ca(2+) is bound by residues D24, D201, and H202.

This sequence belongs to the sulfatase family. The cofactor is Ca(2+).

Its pathway is protein modification; protein glycosylation. It functions in the pathway cell surface structure biogenesis; S-layer biogenesis. Its function is as follows. Involved in N-glycan biosynthetic pathway that takes place under low-salt conditions (1.75 M instead of 3.4 M). Participates in the formation of the tetrasaccharide present at 'Asn-532' of S-layer glycoprotein Csg, consisting of a sulfated hexose, 2 hexoses and rhamnose. Mediates sulfation of sugar 1 in the tetrasaccharide. This chain is Low-salt glycan biosynthesis sulfotransferase Agl7, found in Haloferax volcanii (strain ATCC 29605 / DSM 3757 / JCM 8879 / NBRC 14742 / NCIMB 2012 / VKM B-1768 / DS2) (Halobacterium volcanii).